Consider the following 975-residue polypeptide: Lateral signaling target protein 2 homolog (975 aa).

2 disordered regions span residues 299–458 (PLGS…GTDE) and 504–523 (YGTAEQQGHQGLEEEEPSTS). Composition is skewed to low complexity over residues 302-352 (SSSI…TTNT), 365-376 (NNHNSNSNSSSN), 383-400 (TLRSPSMLSLSTTSTPTA), and 408-429 (PSHSIASTSSAATSSTNPPADW). The segment covering 430–458 (SDGDDEDEDDDDIDVDEEDPESSDDGTDE) has biased composition (acidic residues). Phosphoserine occurs at positions 540 and 541. 2 disordered regions span residues 556 to 633 (EEHM…SSLS) and 740 to 891 (DNVF…SPPA). Positions 564–602 (GRHHRHHQSHHHHHHHRHSHQHQHRQPHPHRTTRSGRKR) are enriched in basic residues. A compositionally biased stretch (low complexity) spans 621-633 (LASGDTSAASSLS). The segment covering 751–770 (ATGQRHSAGASMQRNNTIDL) has biased composition (polar residues). A Phosphoserine modification is found at Ser796. 2 stretches are compositionally biased toward low complexity: residues 802–860 (AASS…PVSA) and 877–890 (PSSATSTSATLSPP). An FYVE-type zinc finger spans residues 895–955 (DGKAPRCMAC…VCRDCYVREV (61 aa)). Zn(2+)-binding residues include Cys901, Cys904, Cys917, Cys920, Cys925, Cys928, Cys947, and Cys950.

This sequence belongs to the lst-2 family.

Its function is as follows. Negative regulator of epidermal growth factor receptor (EGFR) signaling. In Drosophila sechellia (Fruit fly), this protein is Lateral signaling target protein 2 homolog.